The chain runs to 445 residues: UPF0210 protein SZO_15840 (445 aa).

Belongs to the UPF0210 family. As to quaternary structure, homodimer.

The polypeptide is UPF0210 protein SZO_15840 (Streptococcus equi subsp. zooepidemicus (strain H70)).